The sequence spans 355 residues: Probable NADPH-dependent quinone reductase tdiC (355 aa).

The protein belongs to the zinc-containing alcohol dehydrogenase family. Requires NADPH as cofactor.

It participates in secondary metabolite biosynthesis. In terms of biological role, probable NADPH-dependent quinone reductase; part of the gene cluster that mediates the biosynthesis of terrequinone A, an antitumor agent. The first step in the biosynthetic pathway for terrequinone A is formation of indole pyruvic acid (IPA) from L-tryptophan by the aminotransferase tdiD. The nonribosomal peptide synthase tdiA then immediately converts unstable IPA to didemethylasterriquinone D (DDAQ D), via condensation of 2 IPA molecules. The symmetric connectivity of the 2 IPA molecules is thought to arise by head-to-tail dual Claisen condensations facilitated by the TE domain. TdiB then catalyzes reverse prenylation by transferring dimethylallyl diphosphate to carbon atom 2' of DDAQ D, to yield asterriquinone C-1. Finally, tdiC and tdiE enzymes robustly convert asterriquinone C-1 to terrequinone A via a transformation involving regular prenylation at carbon atom 5, which requires elimination of the hydroxy group on C-5. The sequence is that of Probable NADPH-dependent quinone reductase tdiC from Emericella nidulans (strain FGSC A4 / ATCC 38163 / CBS 112.46 / NRRL 194 / M139) (Aspergillus nidulans).